The chain runs to 291 residues: ATP synthase gamma chain (291 aa).

It belongs to the ATPase gamma chain family. F-type ATPases have 2 components, CF(1) - the catalytic core - and CF(0) - the membrane proton channel. CF(1) has five subunits: alpha(3), beta(3), gamma(1), delta(1), epsilon(1). CF(0) has three main subunits: a, b and c.

The protein localises to the cell inner membrane. Functionally, produces ATP from ADP in the presence of a proton gradient across the membrane. The gamma chain is believed to be important in regulating ATPase activity and the flow of protons through the CF(0) complex. This is ATP synthase gamma chain from Pelagibacter ubique (strain HTCC1062).